The following is a 394-amino-acid chain: Lipid-A-disaccharide synthase (394 aa).

It belongs to the LpxB family.

It catalyses the reaction 2-N,3-O-bis[(3R)-3-hydroxytetradecanoyl]-alpha-D-glucosaminyl 1-phosphate + UDP-2-N,3-O-bis[(3R)-3-hydroxytetradecanoyl]-alpha-D-glucosamine = lipid A disaccharide (E. coli) + UDP + H(+). The catalysed reaction is a lipid X + a UDP-2-N,3-O-bis[(3R)-3-hydroxyacyl]-alpha-D-glucosamine = a lipid A disaccharide + UDP + H(+). It functions in the pathway glycolipid biosynthesis; lipid IV(A) biosynthesis; lipid IV(A) from (3R)-3-hydroxytetradecanoyl-[acyl-carrier-protein] and UDP-N-acetyl-alpha-D-glucosamine: step 5/6. In terms of biological role, condensation of UDP-2,3-diacylglucosamine and 2,3-diacylglucosamine-1-phosphate to form lipid A disaccharide, a precursor of lipid A, a phosphorylated glycolipid that anchors the lipopolysaccharide to the outer membrane of the cell. The chain is Lipid-A-disaccharide synthase from Yersinia pestis.